Here is a 624-residue protein sequence, read N- to C-terminus: Anti-CBASS protein Acb1 (624 aa).

Position 106 (Tyr106) interacts with 3',3'-cGAMP. 3',3'-cUAMP is bound at residue Tyr106. Residues His503, Thr505, His581, and Thr583 contribute to the active site. Residue Trp617 participates in 3',3'-cGAMP binding. A 3',3'-cUAMP-binding site is contributed by Trp617.

It belongs to the anti-CBASS protein Acb1 family.

The catalysed reaction is 3',3'-cUAMP + H2O = U[3'-5']pAp[3'] + H(+). The enzyme catalyses 3',3',3'-c-tri-AMP + H2O = A[3'-5']pA[3'-5']pAp[3'] + H(+). It catalyses the reaction 3',3',3'-cAAG + H2O = G[3'-5']pA[3'-5']pAp[3'] + H(+). It carries out the reaction 3',3',3'-cAAG + H2O = A[3'-5']pG[3'-5']pAp[3'] + H(+). The catalysed reaction is 3',3'-cGAMP + H2O = G[3'-5']pAp[3'] + H(+). Functionally, counteracts or regulates the endogenous CBASS antiviral defense system. Phosphodiesterase that enables metal-independent hydrolysis of the host cyclic di- and trinucleotide CBASS signals such as 3'3'-cGAMP, 3'3'cUA, and 3'3'3'-cAAA. The sequence is that of Anti-CBASS protein Acb1 from Sphingomonas paeninsulae.